The chain runs to 312 residues: uncharacterized protein (312 aa).

2 helical membrane-spanning segments follow: residues 4–24 and 286–306; these read AIYLLILCIFGLFSVYFTYAE and YLLSFIGIIIGFGIIGLAIYL.

The protein localises to the cell membrane. This is an uncharacterized protein from Methanocaldococcus jannaschii (strain ATCC 43067 / DSM 2661 / JAL-1 / JCM 10045 / NBRC 100440) (Methanococcus jannaschii).